A 634-amino-acid chain; its full sequence is MTVETDKQTLGFQTEVKQLLQLMIHSLYSNKEIFLRELVSNAADAADKLRFEALVKPELLEGSGELRIRVDYDKDARTVTIDDNGIGMSREDAVSHLGTIAKSGTADFLKHLSGDQKKDANLIGQFGVGFYSAFIVADQVDVYSRRAGLPASEGVHWSSRGEGEFEIASVDKPERGTRIVLHLKEGEESFADGWTLRGILKKYSDHIGLPIEMRKEHYGEAADKPAEPEWEAVNRASALWTRPKSEIKDEEYQEFYKHVAHDAGNPLAWSHNKVEGKLEYTSLLFVPGRAPFDLYHRDSAKGLKLYVQRVFIMDQAEQFLPLYLRFIKGVVDSSDLSLNVSREILQSGPVVDSMKSALTKRSLDMLEKLAKDKPDDYATFWRNFGQALKEGPAEDYANREKIAGLLRFSSTHDTTGAQSVGLADYVGRLADGQDKLYYLTGESYAQIKDSPHLEVFRKKGIEVLLLTDRIDEWLMSYLTEFDGKSFVDVARGDLDLGKLDSEEDKKAQEEVAKSKEGLASRIKAALGDDVAELRVSHRLTDSPAILAIGQGDLGLQMRQLLEASGQAVPESKPVFEFNPTHPLIEKLDAEQDMDRFGDLSRVLFDQAALAAGDSLKDPAAYVRRLNKLLLELSA.

The interval 1-342 (MTVETDKQTL…SSDLSLNVSR (342 aa)) is a; substrate-binding. The segment at 343 to 559 (EILQSGPVVD…QGDLGLQMRQ (217 aa)) is b. A c region spans residues 560 to 634 (LLEASGQAVP…LNKLLLELSA (75 aa)).

It belongs to the heat shock protein 90 family. As to quaternary structure, homodimer.

The protein resides in the cytoplasm. Molecular chaperone. Has ATPase activity. The protein is Chaperone protein HtpG of Xanthomonas axonopodis pv. citri (strain 306).